We begin with the raw amino-acid sequence, 337 residues long: Zinc finger protein 488 (337 aa).

Positions 1 to 10 (MAAGTSTLLS) are enriched in polar residues. Disordered regions lie at residues 1 to 32 (MAAGTSTLLSLSGPADHMAEGKGAPLRPSVEK), 55 to 83 (SDTAAGKGSQDEAYTELSLPTAPNKPRLD), and 146 to 179 (SAWPGAPRSEQKSAFSKPAKRPAEKPKRSPMLLA). The segment at 69 to 184 (TELSLPTAPN…PMLLAGGSAE (116 aa)) is important for transcriptional repression activity. 2 consecutive C2H2-type zinc fingers follow at residues 272–299 (NWCAKCNLAFRLTADLVFHMRSHHKREH) and 314–336 (LTCPVCHEYFRERHHLSRHMASH). The short motif at 295-302 (HKREHVGP) is the Nuclear localization signal element.

The protein belongs to the krueppel C2H2-type zinc-finger protein family. As to quaternary structure, interacts with OLIG2.

The protein localises to the nucleus. Functionally, transcriptional repressor. Plays a role in oligodendrocyte differentiation, together with OLIG2. Mediates Notch signaling-activated formation of oligodendrocyte precursors. Promotes differentiation of adult neural stem progenitor cells (NSPCs) into mature oligodendrocytes and contributes to remyelination following nerve injury. The chain is Zinc finger protein 488 (Znf488) from Mus musculus (Mouse).